A 165-amino-acid chain; its full sequence is Large ribosomal subunit protein uL10 (165 aa).

It belongs to the universal ribosomal protein uL10 family. As to quaternary structure, part of the ribosomal stalk of the 50S ribosomal subunit. The N-terminus interacts with L11 and the large rRNA to form the base of the stalk. The C-terminus forms an elongated spine to which L12 dimers bind in a sequential fashion forming a multimeric L10(L12)X complex.

Forms part of the ribosomal stalk, playing a central role in the interaction of the ribosome with GTP-bound translation factors. The chain is Large ribosomal subunit protein uL10 from Shewanella halifaxensis (strain HAW-EB4).